The chain runs to 208 residues: Small ribosomal subunit protein uS5 (208 aa).

The span at 1 to 21 (MSDREQRDGGRSAENNNDRKG) shows a compositional bias: basic and acidic residues. Residues 1 to 38 (MSDREQRDGGRSAENNNDRKGRNNGRRNDRRNHQDNER) form a disordered region. The S5 DRBM domain occupies 41 to 104 (YIERVVTINR…EEARKNFFRV (64 aa)).

This sequence belongs to the universal ribosomal protein uS5 family. As to quaternary structure, part of the 30S ribosomal subunit. Contacts proteins S4 and S8.

Its function is as follows. With S4 and S12 plays an important role in translational accuracy. Located at the back of the 30S subunit body where it stabilizes the conformation of the head with respect to the body. This chain is Small ribosomal subunit protein uS5, found in Corynebacterium aurimucosum (strain ATCC 700975 / DSM 44827 / CIP 107346 / CN-1) (Corynebacterium nigricans).